The sequence spans 84 residues: Metallothionein-like protein 4A (84 aa).

The disordered stretch occupies residues 1 to 26 (MADTGKGSSVAGCNDSCGCPSPCPGG).

It belongs to the metallothionein superfamily. Type 15 family. Expressed specifically in seeds.

Its subcellular location is the cytoplasm. The protein localises to the nucleus. It is found in the cell membrane. Metallothioneins have a high content of cysteine residues that bind various heavy metals. Functions as a metal chelator of copper (Cu) and zinc (Zn). Plays a role in storing and distributing Zn ion in seed. The polypeptide is Metallothionein-like protein 4A (MT4A) (Arabidopsis thaliana (Mouse-ear cress)).